The following is a 390-amino-acid chain: Phosphopentomutase (390 aa).

Residues Asp11, Asp283, His288, Asp324, His325, and His336 each contribute to the Mn(2+) site.

The protein belongs to the phosphopentomutase family. The cofactor is Mn(2+).

The protein localises to the cytoplasm. It carries out the reaction 2-deoxy-alpha-D-ribose 1-phosphate = 2-deoxy-D-ribose 5-phosphate. The enzyme catalyses alpha-D-ribose 1-phosphate = D-ribose 5-phosphate. It participates in carbohydrate degradation; 2-deoxy-D-ribose 1-phosphate degradation; D-glyceraldehyde 3-phosphate and acetaldehyde from 2-deoxy-alpha-D-ribose 1-phosphate: step 1/2. In terms of biological role, isomerase that catalyzes the conversion of deoxy-ribose 1-phosphate (dRib-1-P) and ribose 1-phosphate (Rib-1-P) to deoxy-ribose 5-phosphate (dRib-5-P) and ribose 5-phosphate (Rib-5-P), respectively. The chain is Phosphopentomutase from Alkaliphilus metalliredigens (strain QYMF).